A 492-amino-acid polypeptide reads, in one-letter code: Cytoplasmic dynein 1 light intermediate chain 2 (492 aa).

Glycine 61–threonine 68 is an ATP binding site. Disordered regions lie at residues proline 187–aspartate 206, alanine 371–alanine 423, and leucine 437–alanine 492. Residue serine 194 is modified to Phosphoserine. A compositionally biased stretch (polar residues) spans alanine 371–serine 381. Phosphoserine is present on residues serine 383 and serine 391. Arginine 397 is subject to Omega-N-methylarginine. Threonine 441 is modified (phosphothreonine). 2 positions are modified to phosphoserine: serine 443 and serine 446. The span at valine 452–glutamine 469 shows a compositional bias: polar residues. Positions glutamate 471–aspartate 480 are enriched in basic and acidic residues. Over residues methionine 482–alanine 492 the composition is skewed to polar residues.

Belongs to the dynein light intermediate chain family. In terms of assembly, homodimer. The cytoplasmic dynein 1 complex consists of two catalytic heavy chains (HCs) and a number of non-catalytic subunits presented by intermediate chains (ICs), light intermediate chains (LICs) and light chains (LCs); the composition seems to vary in respect to the IC, LIC and LC composition. The heavy chain homodimer serves as a scaffold for the probable homodimeric assembly of the respective non-catalytic subunits. The ICs and LICs bind directly to the HC dimer and the LCs assemble on the IC dimer. Interacts with DYNC1H1; DYNC1LI1 and DYNC1LI2 bind mutually exclusive to DYNC1H.

The protein resides in the cytoplasm. Its subcellular location is the cytoskeleton. In terms of biological role, acts as one of several non-catalytic accessory components of the cytoplasmic dynein 1 complex that are thought to be involved in linking dynein to cargos and to adapter proteins that regulate dynein function. Cytoplasmic dynein 1 acts as a motor for the intracellular retrograde motility of vesicles and organelles along microtubules. May play a role in binding dynein to membranous organelles or chromosomes. This Pongo abelii (Sumatran orangutan) protein is Cytoplasmic dynein 1 light intermediate chain 2 (DYNC1LI2).